A 292-amino-acid chain; its full sequence is Short chain dehydrogenase/reductase CPUR_05418 (292 aa).

Residues I44 and R156 each contribute to the NADP(+) site. Catalysis depends on proton donor residues S172 and Y186. Residues Y186, K190, I221, and T223 each coordinate NADP(+). K190 (lowers pKa of active site Tyr) is an active-site residue.

The protein belongs to the short-chain dehydrogenases/reductases (SDR) family.

It participates in secondary metabolite biosynthesis. Short chain dehydrogenase/reductase; part of the ergochrome gene cluster responsible for the typical purple-black color of the ergot sclerotia. The ergochrome gene cluster produces several ergot pigments including the yellow ergochrome secalonic acid and its derivatives, as well as the red anthraquinones endocrocin and clavorubin. The pathway begins with the synthesis of atrochrysone thioester by the polyketide synthase (PKS) CPUR_05437. The atrochrysone carboxyl ACP thioesterase CPUR_05436 then breaks the thioester bond and releases the atrochrysone carboxylic acid from CPUR_05437. The atrochrysone carboxylic acid is then converted to atrochrysone which is further transformed into emodin anthrone. The next step is performed by the anthrone oxygenase CPUR_05434 that catalyzes the oxidation of emodinanthrone to emodin. Emodin is further modified to yield monodictyphenone via several steps involving CPUR_05427, CPUR_05428, CPUR_05429 and CPUR_05430. The short chain dehydrogenase/reductase CPUR_05418 then catalyzes the C-5 ketoreduction to give the xanthone skeleton of the monomeric units. Ergochromes formation requires further dimerization steps of different xanthone units, probably catalyzed by the cytochrome P450 monooxygenase CPUR_05419. CPUR_05425, CPUR_05426 and CPUR_05431 are unique to Claviceps, thus it is likely that they are involved in further modification of xanthone units or in their dimerization. The yellow ergochromes and the red anthraquinone pigments endocrocin and clavorubin are products from the same PKS derived precursors and the latter are likely shunt products in the pathway of xanthone biosynthesis. It is proposed that atrochrysone carboxylic acid released from the PKS CPUR_05437 can also be converted to endocrocin anthrone which is further oxidized into endocrocin by CPUR_05435. Endocrocin could be then modified to clavorubin, possibly by CPUR_05423 and CPUR_05431. Clavorubin is the principal anthraquinone metabolite produced by the cluster with a much higher yield compared to endocrocin. This is Short chain dehydrogenase/reductase CPUR_05418 from Claviceps purpurea (strain 20.1) (Ergot fungus).